We begin with the raw amino-acid sequence, 119 residues long: HTH-type transcriptional regulator SarX (119 aa).

The segment at residues Leu55–Glu78 is a DNA-binding region (H-T-H motif).

Belongs to the SarA family.

It localises to the cytoplasm. In terms of biological role, involved in the regulation of virulence genes. Acts as a repressor of the agr locus and consequently targets genes regulated by the agr system such as sspA, hla and hlb. Binds directly to the agr promoter region. This chain is HTH-type transcriptional regulator SarX (sarX), found in Staphylococcus aureus (strain USA300).